The primary structure comprises 31 residues: Circulin-B (31 aa).

A cross-link (cyclopeptide (Gly-Asn)) is located at residues 1 to 31; the sequence is GVIPCGESCVFIPCISTLLGCSCKNKVCYRN. Intrachain disulfides connect Cys5-Cys21, Cys9-Cys23, and Cys14-Cys28.

This is a cyclic peptide.

Its function is as follows. Probably participates in a plant defense mechanism. Has antibiotic activity. Inhibits the cytopathic effects and replication of the human immunodeficiency virus. Active against both Gram-positive and Gram-negative bacteria. This chain is Circulin-B, found in Chassalia parviflora.